The primary structure comprises 254 residues: Alcohol dehydrogenase (254 aa).

10–33 is an NAD(+) binding site; sequence FVAGLGGIGFDTSREIVKSGPKNL. Substrate is bound at residue S138. Y151 functions as the Proton acceptor in the catalytic mechanism.

It belongs to the short-chain dehydrogenases/reductases (SDR) family. As to quaternary structure, homodimer.

The catalysed reaction is a primary alcohol + NAD(+) = an aldehyde + NADH + H(+). It carries out the reaction a secondary alcohol + NAD(+) = a ketone + NADH + H(+). The chain is Alcohol dehydrogenase (Adh) from Drosophila mayaguana (Fruit fly).